The chain runs to 315 residues: Probable inactive acetaldehyde dehydrogenase 1 (315 aa).

NAD(+) is bound by residues 14–17 (SGDV) and Asn288.

It belongs to the acetaldehyde dehydrogenase family.

The chain is Probable inactive acetaldehyde dehydrogenase 1 from Mycolicibacterium vanbaalenii (strain DSM 7251 / JCM 13017 / BCRC 16820 / KCTC 9966 / NRRL B-24157 / PYR-1) (Mycobacterium vanbaalenii).